Consider the following 307-residue polypeptide: Ribosomal RNA small subunit methyltransferase H (307 aa).

S-adenosyl-L-methionine contacts are provided by residues 32–34 (GGH), aspartate 52, phenylalanine 78, aspartate 100, and glutamine 107.

It belongs to the methyltransferase superfamily. RsmH family.

The protein resides in the cytoplasm. It carries out the reaction cytidine(1402) in 16S rRNA + S-adenosyl-L-methionine = N(4)-methylcytidine(1402) in 16S rRNA + S-adenosyl-L-homocysteine + H(+). In terms of biological role, specifically methylates the N4 position of cytidine in position 1402 (C1402) of 16S rRNA. This is Ribosomal RNA small subunit methyltransferase H from Coxiella burnetii (strain CbuK_Q154) (Coxiella burnetii (strain Q154)).